The chain runs to 286 residues: Alpha-ketoglutarate-dependent dioxygenase alkB homolog 3 (286 aa).

Positions 21 to 45 are disordered; sequence QAIAQPATTAKSHLHQKPGQTWKNK. The segment covering 22-31 has biased composition (polar residues); the sequence is AIAQPATTAK. Substrate is bound by residues tryptophan 115 and 141–143; that span reads YTY. The Fe2OG dioxygenase domain occupies 172–278; sequence TFNSLLCNLY…RVNLTFRTVY (107 aa). Residue leucine 177 is modified to (4R)-5-hydroxyleucine; alternate. (4R)-5-oxoleucine; alternate is present on leucine 177. Position 179–181 (179–181) interacts with 2-oxoglutarate; it reads NLY. Histidine 191 and aspartate 193 together coordinate Fe cation. A substrate-binding site is contributed by aspartate 194. Histidine 257 contributes to the Fe cation binding site. Residues 269 to 275 and arginine 275 each bind 2-oxoglutarate; that span reads RVNLTFR.

Belongs to the alkB family. In terms of assembly, interacts with the ASCC complex composed of ASCC1, ASCC2 and ASCC3. Interacts directly with ASCC3, and is thereby recruited to the ASCC complex. Interacts with OTUD4; the interaction is direct. Interacts with USP7 and USP9X. It depends on Fe(2+) as a cofactor. Ubiquitinated; undergoes 'Lys-48'-linked polyubiquitination. OTUD4 promotes USP7 and USP9X-dependent deubiquitination of 'Lys-48'-polyubiquitinated ALKBH3 promoting the repair of alkylated DNA lesions. Ubiquitous. Detected in heart, pancreas, skeletal muscle, thymus, testis, ovary, spleen, prostate, small intestine, peripheral blood leukocytes, urinary bladder and colon.

It is found in the nucleus. The protein localises to the cytoplasm. The catalysed reaction is an N(1)-methyladenosine in mRNA + 2-oxoglutarate + O2 = an adenosine in mRNA + formaldehyde + succinate + CO2. It carries out the reaction a methylated nucleobase within DNA + 2-oxoglutarate + O2 = a nucleobase within DNA + formaldehyde + succinate + CO2. The enzyme catalyses an N(1)-methyl-2'-deoxyadenosine in single-stranded DNA + 2-oxoglutarate + O2 = a 2'-deoxyadenosine in single-stranded DNA + formaldehyde + succinate + CO2 + H(+). It catalyses the reaction an N(3)-methyl-2'-deoxycytidine in single-stranded DNA + 2-oxoglutarate + O2 = a 2'-deoxycytidine in single-stranded DNA + formaldehyde + succinate + CO2 + H(+). The catalysed reaction is a 3,N(4)-etheno-2'-deoxycytidine in single-stranded DNA + 2-oxoglutarate + O2 + H2O = a 2'-deoxycytidine in single-stranded DNA + glyoxal + succinate + CO2. With respect to regulation, activated by ascorbate. In terms of biological role, dioxygenase that mediates demethylation of DNA and RNA containing 1-methyladenosine (m1A). Repairs alkylated DNA containing 1-methyladenosine (m1A) and 3-methylcytosine (m3C) by oxidative demethylation. Has a strong preference for single-stranded DNA. Able to process alkylated m3C within double-stranded regions via its interaction with ASCC3, which promotes DNA unwinding to generate single-stranded substrate needed for ALKBH3. Can repair exocyclic 3,N4-ethenocytosine adducs in single-stranded DNA. Also acts on RNA. Demethylates N(1)-methyladenosine (m1A) RNA, an epigenetic internal modification of messenger RNAs (mRNAs) highly enriched within 5'-untranslated regions (UTRs) and in the vicinity of start codons. Requires molecular oxygen, alpha-ketoglutarate and iron. The chain is Alpha-ketoglutarate-dependent dioxygenase alkB homolog 3 from Homo sapiens (Human).